Here is a 221-residue protein sequence, read N- to C-terminus: Queuosine precursor transporter (221 aa).

Topologically, residues Met1–Ala12 are cytoplasmic. Residues Leu13–Leu33 form a helical membrane-spanning segment. A topological domain (periplasmic) is located at residue Pro34. The chain crosses the membrane as a helical span at residues Val35 to Ala55. The Cytoplasmic segment spans residues Thr56–Arg70. Residues Ile71–Tyr91 traverse the membrane as a helical segment. Topologically, residues Met92–Gly97 are periplasmic. Residues Phe98–Ala118 traverse the membrane as a helical segment. Topologically, residues Tyr119 to Pro143 are cytoplasmic. Residues Thr144–Trp164 form a helical membrane-spanning segment. Residues Arg165–Cys184 lie on the Periplasmic side of the membrane. Residues Phe185–Leu205 form a helical membrane-spanning segment. Topologically, residues Leu206–Ser221 are cytoplasmic.

Belongs to the vitamin uptake transporter (VUT/ECF) (TC 2.A.88) family. Q precursor transporter subfamily.

Its subcellular location is the cell inner membrane. Its function is as follows. Involved in the import of queuosine (Q) precursors, required for Q precursor salvage. Transports 7-cyano-7-deazaguanine (preQ(0)) and 7-aminomethyl-7-deazaguanine (preQ(1)), with a preference for preQ(0). This is Queuosine precursor transporter (yhhQ) from Escherichia coli (strain K12).